Here is a 435-residue protein sequence, read N- to C-terminus: GTPase Der (435 aa).

EngA-type G domains lie at 4–167 (PVVA…GDKA) and 175–350 (IRFS…ENQT). GTP is bound by residues 10–17 (GRPNVGKS), 57–61 (DTGGI), 119–122 (NKAD), 181–188 (GRPNVGKS), 228–232 (DTAGI), and 293–296 (NKWD). Positions 351–435 (RRIQSSVLND…PIKILARKRK (85 aa)) constitute a KH-like domain.

This sequence belongs to the TRAFAC class TrmE-Era-EngA-EngB-Septin-like GTPase superfamily. EngA (Der) GTPase family. Associates with the 50S ribosomal subunit.

Its function is as follows. GTPase that plays an essential role in the late steps of ribosome biogenesis. The polypeptide is GTPase Der (Lactobacillus johnsonii (strain CNCM I-12250 / La1 / NCC 533)).